The primary structure comprises 143 residues: Host transcription reprogramming factor 8 (143 aa).

The N-terminal stretch at 1–19 (MHTYKFIQIALLFASVALA) is a signal peptide. The segment covering 24 to 34 (PSPPNPPPVPQ) has biased composition (pro residues). A disordered region spans residues 24 to 43 (PSPPNPPPVPQLPNSETKSN). Residues 48–71 (HSCEFCGVVKPSGPAYLEHYHQNH) form a C2H2-type 1 zinc finger. The disordered stretch occupies residues 77-99 (GKLATPSPPNPPPVPTQKVETHA). A compositionally biased stretch (pro residues) spans 82-91 (PSPPNPPPVP). The segment at 103-126 (HGCEWCNKVEPSGPAYIKHYKENH) adopts a C2H2-type 2 zinc-finger fold.

It localises to the secreted. Its subcellular location is the host nucleus. In terms of biological role, probable secreted effector that translocates into the nuclei of host cells to reprogram the expression of targeted genes by binding on effector binding elements in rice. The polypeptide is Host transcription reprogramming factor 8 (Pyricularia oryzae (strain 70-15 / ATCC MYA-4617 / FGSC 8958) (Rice blast fungus)).